A 375-amino-acid polypeptide reads, in one-letter code: Growth/differentiation factor 8 (375 aa).

The signal sequence occupies residues 1–18; that stretch reads MQKLQISVYIYLFMLIVA. A propeptide spanning residues 19-266 is cleaved from the precursor; that stretch reads GPVDLNEKSE…VTDTPKRSRR (248 aa). N47 and N71 each carry an N-linked (GlcNAc...) asparagine glycan. Intrachain disulfides connect C272–C282, C281–C340, C309–C372, and C313–C374.

This sequence belongs to the TGF-beta family. As to quaternary structure, homodimer; disulfide-linked. Interacts with WFIKKN2, leading to inhibit its activity. Interacts with FSTL3. In terms of processing, synthesized as large precursor molecule that undergoes proteolytic cleavage to generate an N-terminal propeptide and a disulfide linked C-terminal dimer, which is the biologically active molecule. The circulating form consists of a latent complex of the C-terminal dimer and other proteins, including its propeptide, which maintain the C-terminal dimer in a latent, inactive state. Ligand activation requires additional cleavage of the prodomain by a tolloid-like metalloproteinase.

It is found in the secreted. Its function is as follows. Acts specifically as a negative regulator of skeletal muscle growth. This Taurotragus derbianus (Giant eland) protein is Growth/differentiation factor 8 (MSTN).